The primary structure comprises 276 residues: Dermonecrotic toxin LlSicTox-alphaIV2iv (276 aa).

His-5 is a catalytic residue. Mg(2+) is bound by residues Glu-25 and Asp-27. His-41 serves as the catalytic Nucleophile. 2 cysteine pairs are disulfide-bonded: Cys-45-Cys-51 and Cys-47-Cys-193. Asp-85 serves as a coordination point for Mg(2+).

Belongs to the arthropod phospholipase D family. Class II subfamily. It depends on Mg(2+) as a cofactor. Expressed by the venom gland.

It is found in the secreted. The catalysed reaction is an N-(acyl)-sphingosylphosphocholine = an N-(acyl)-sphingosyl-1,3-cyclic phosphate + choline. The enzyme catalyses an N-(acyl)-sphingosylphosphoethanolamine = an N-(acyl)-sphingosyl-1,3-cyclic phosphate + ethanolamine. It carries out the reaction a 1-acyl-sn-glycero-3-phosphocholine = a 1-acyl-sn-glycero-2,3-cyclic phosphate + choline. It catalyses the reaction a 1-acyl-sn-glycero-3-phosphoethanolamine = a 1-acyl-sn-glycero-2,3-cyclic phosphate + ethanolamine. Dermonecrotic toxins cleave the phosphodiester linkage between the phosphate and headgroup of certain phospholipids (sphingolipid and lysolipid substrates), forming an alcohol (often choline) and a cyclic phosphate. This toxin acts on sphingomyelin (SM). It may also act on ceramide phosphoethanolamine (CPE), lysophosphatidylcholine (LPC) and lysophosphatidylethanolamine (LPE), but not on lysophosphatidylserine (LPS), and lysophosphatidylglycerol (LPG). It acts by transphosphatidylation, releasing exclusively cyclic phosphate products as second products. Induces dermonecrosis, hemolysis, increased vascular permeability, edema, inflammatory response, and platelet aggregation. This is Dermonecrotic toxin LlSicTox-alphaIV2iv from Loxosceles laeta (South American recluse spider).